The chain runs to 868 residues: Translation initiation factor IF-2 (868 aa).

Residues 103 to 183 (RSELPETSDR…RQAAAERETV (81 aa)) are compositionally biased toward basic and acidic residues. The interval 103–274 (RSELPETSDR…GRPMLMPEQK (172 aa)) is disordered. The segment covering 190–207 (VAAPPIPRPAPEPRPPAR) has biased composition (pro residues). The segment covering 213-254 (PKAEAPRAHPAERETEARGDKRSAGLSRKDEYRELQGDDFRK) has biased composition (basic and acidic residues). The span at 255–264 (GGGKRKKPKT) shows a compositional bias: basic residues. Residues 369 to 538 (PRPPVVTIMG…LVQAEVLELK (170 aa)) form the tr-type G domain. The tract at residues 378-385 (GHVDHGKT) is G1. GTP is bound at residue 378 to 385 (GHVDHGKT). Residues 403 to 407 (GITQH) are G2. Residues 424–427 (DTPG) are G3. GTP is bound by residues 424–428 (DTPGH) and 478–481 (NKMD). Residues 478–481 (NKMD) form a G4 region. The tract at residues 514-516 (SAK) is G5.

This sequence belongs to the TRAFAC class translation factor GTPase superfamily. Classic translation factor GTPase family. IF-2 subfamily.

It localises to the cytoplasm. Its function is as follows. One of the essential components for the initiation of protein synthesis. Protects formylmethionyl-tRNA from spontaneous hydrolysis and promotes its binding to the 30S ribosomal subunits. Also involved in the hydrolysis of GTP during the formation of the 70S ribosomal complex. This chain is Translation initiation factor IF-2, found in Methylococcus capsulatus (strain ATCC 33009 / NCIMB 11132 / Bath).